Here is a 99-residue protein sequence, read N- to C-terminus: Large ribosomal subunit protein eL21 (99 aa).

The segment covering 1–18 has biased composition (basic residues); that stretch reads MVKHSRGNRTRSRKLLKK. The interval 1 to 26 is disordered; sequence MVKHSRGNRTRSRKLLKKSPRERGAV.

It belongs to the eukaryotic ribosomal protein eL21 family.

The sequence is that of Large ribosomal subunit protein eL21 from Metallosphaera sedula (strain ATCC 51363 / DSM 5348 / JCM 9185 / NBRC 15509 / TH2).